Consider the following 112-residue polypeptide: Low molecular weight protein antigen 6 (112 aa).

It localises to the secreted. The sequence is that of Low molecular weight protein antigen 6 (cfp6) from Mycobacterium bovis (strain ATCC BAA-935 / AF2122/97).